The sequence spans 66 residues: Cold shock protein CspB (66 aa).

The CSD domain maps to 4–63 (GKVKWFNNEKGYGFIEVEGGSDVFVHFTAIQGEGFKTLEEGQEVSFEIVQGNRGPQAANV).

As to quaternary structure, homodimer.

It is found in the cytoplasm. Functionally, affects cell viability at low temperatures. This Bacillus caldolyticus protein is Cold shock protein CspB (cspB).